We begin with the raw amino-acid sequence, 76 residues long: Small ribosomal subunit protein bS18 (76 aa).

Belongs to the bacterial ribosomal protein bS18 family. In terms of assembly, part of the 30S ribosomal subunit. Forms a tight heterodimer with protein bS6.

Binds as a heterodimer with protein bS6 to the central domain of the 16S rRNA, where it helps stabilize the platform of the 30S subunit. The chain is Small ribosomal subunit protein bS18 from Symbiobacterium thermophilum (strain DSM 24528 / JCM 14929 / IAM 14863 / T).